Here is a 154-residue protein sequence, read N- to C-terminus: Large ribosomal subunit protein uL13 (154 aa).

The protein belongs to the universal ribosomal protein uL13 family. Part of the 50S ribosomal subunit.

Its function is as follows. This protein is one of the early assembly proteins of the 50S ribosomal subunit, although it is not seen to bind rRNA by itself. It is important during the early stages of 50S assembly. The polypeptide is Large ribosomal subunit protein uL13 (Cereibacter sphaeroides (strain ATCC 17029 / ATH 2.4.9) (Rhodobacter sphaeroides)).